A 247-amino-acid polypeptide reads, in one-letter code: Probable transcriptional regulatory protein ABO_0750 (247 aa).

Belongs to the TACO1 family.

Its subcellular location is the cytoplasm. The protein is Probable transcriptional regulatory protein ABO_0750 of Alcanivorax borkumensis (strain ATCC 700651 / DSM 11573 / NCIMB 13689 / SK2).